A 74-amino-acid polypeptide reads, in one-letter code: Protein SlyX homolog (74 aa).

It belongs to the SlyX family.

The chain is Protein SlyX homolog from Neisseria meningitidis serogroup C (strain 053442).